The sequence spans 162 residues: Large ribosomal subunit protein uL15 (162 aa).

Residues 1–18 (MKLNEIRDNEGATKDRMR) show a composition bias toward basic and acidic residues. The segment at 1 to 42 (MKLNEIRDNEGATKDRMRVGRGIGSGKGKTAGRGVKGQKART) is disordered. A compositionally biased stretch (gly residues) spans 21 to 35 (RGIGSGKGKTAGRGV).

This sequence belongs to the universal ribosomal protein uL15 family. Part of the 50S ribosomal subunit.

Binds to the 23S rRNA. The protein is Large ribosomal subunit protein uL15 of Methylobacterium sp. (strain 4-46).